The chain runs to 82 residues: RNA-binding protein Hfq (82 aa).

Positions 11 to 71 (DTFLNHVRKT…ISTIMPGAPI (61 aa)) constitute a Sm domain.

This sequence belongs to the Hfq family. In terms of assembly, homohexamer.

Functionally, RNA chaperone that binds small regulatory RNA (sRNAs) and mRNAs to facilitate mRNA translational regulation in response to envelope stress, environmental stress and changes in metabolite concentrations. Also binds with high specificity to tRNAs. This chain is RNA-binding protein Hfq, found in Nitrobacter winogradskyi (strain ATCC 25391 / DSM 10237 / CIP 104748 / NCIMB 11846 / Nb-255).